Here is a 131-residue protein sequence, read N- to C-terminus: uncharacterized protein (131 aa).

The next 3 helical transmembrane spans lie at 13-35 (RFIK…TFPI), 60-79 (LVAL…TYVC), and 100-119 (LFEI…WNIT).

The protein resides in the membrane. This is an uncharacterized protein from Saccharomyces cerevisiae (strain ATCC 204508 / S288c) (Baker's yeast).